The primary structure comprises 321 residues: MVLTPTKDGPDQESMPLPADNGESPSKQQAPVNRDEMHYLDLLRHIIANGEQRMDRTEVGTLSVFGSQMRFDMRNSFPLLTTKRVFFRAVAEELLWFVAGKTDAKLLQAKNVHIWDGNSSREFLDKMGFTGRAVGDLGPVYGFQWRHFGAQYGTCDDDYSGKGIDQLRQVIDTIRNNPSDRRIIMSAWNPLDIPKMALPPCHCLAQFYVSEKRGELSCQLYQRSADMGLGVPFNIASYALLTHMIAHVTGLKPGDFVHTMGDTHVYLNHVEPLKEQLERTPRPFPKLIIKRQVQDIEDFRFEDFQIVDYNPHPKIQMDMAV.

The interval 1-32 (MVLTPTKDGPDQESMPLPADNGESPSKQQAPV) is disordered. Ser24 and Ser26 each carry phosphoserine. Residue Tyr39 is modified to Phosphotyrosine. Residues Arg56 and 181 to 182 (RR) contribute to the dUMP site. Cys201 serves as the catalytic Nucleophile. At Tyr208 the chain carries Phosphotyrosine. Ser210 is modified (phosphoserine). DUMP contacts are provided by residues 223–226 (RSAD), Asn234, and 264–266 (HVY). Position 226 (Asp226) interacts with (6R)-5,10-methylene-5,6,7,8-tetrahydrofolate. Ala320 lines the (6R)-5,10-methylene-5,6,7,8-tetrahydrofolate pocket.

It belongs to the thymidylate synthase family. In terms of assembly, homodimer.

The catalysed reaction is dUMP + (6R)-5,10-methylene-5,6,7,8-tetrahydrofolate = 7,8-dihydrofolate + dTMP. It participates in pyrimidine metabolism; dTTP biosynthesis. The sequence is that of Thymidylate synthase (Ts) from Drosophila melanogaster (Fruit fly).